The chain runs to 339 residues: Annexin A2 (339 aa).

Serine 2 carries the post-translational modification N-acetylserine. The tract at residues 2 to 24 (STVHEILCKLSLEGDHSTPPSAY) is S100A10-binding site. A Phosphotyrosine; by SRC modification is found at tyrosine 24. Residue serine 26 is modified to Phosphoserine; by PKC. Annexin repeat units lie at residues 33 to 104 (FDAE…GLLK) and 105 to 176 (TPAQ…ALAK). At lysine 49 the chain carries N6-acetyllysine; alternate. A Glycyl lysine isopeptide (Lys-Gly) (interchain with G-Cter in SUMO1); alternate cross-link involves residue lysine 49. A Glycyl lysine isopeptide (Lys-Gly) (interchain with G-Cter in SUMO2); alternate cross-link involves residue lysine 49. Residue lysine 152 is modified to N6-acetyllysine. The residue at position 184 (serine 184) is a Phosphoserine. Annexin repeat units follow at residues 189–261 (ELID…NLVQ) and 265–336 (NKPL…YLCG). The residue at position 199 (tyrosine 199) is a Phosphotyrosine. Lysine 227 is modified (N6-acetyllysine).

This sequence belongs to the annexin family. In terms of assembly, heterotetramer containing 2 light chains of S100A10/p11 and 2 heavy chains of ANXA2/p36. Interacts with ATP1B1. Interacts with DYSF. Interacts with COCH. Interacts (via repeat Annexin 1) with PCSK9 (via the C-terminal domain); the interaction inhibits the degradation of LDLR. Interacts with CEACAM1 (via the cytoplasmic domain); this interaction is regulated by phosphorylation of CEACAM1. Interacts with APPL2 and APPL1; targets APPL2 to endosomes and acting in parallel to RAB5A. Interacts with S100A4. May interact with UBAP2. Interacts with PLEKHG4B; this interaction is required for PLEKHG4B localization to cell-cell adhesions. (Microbial infection) Interacts with human cytomegalovirus (HCMV). As to quaternary structure, (Microbial infection) Interacts with M.pneumoniae CARDS toxin; CARDS probably uses this protein as a receptor. A portion of internalized CARDS remains associated with intracellular annexin 2. Phosphorylation of Tyr-24 enhances heat stress-induced translocation to the cell surface. In terms of processing, ISGylated.

It localises to the secreted. The protein resides in the extracellular space. It is found in the extracellular matrix. Its subcellular location is the basement membrane. The protein localises to the melanosome. Functionally, calcium-regulated membrane-binding protein whose affinity for calcium is greatly enhanced by anionic phospholipids. It binds two calcium ions with high affinity. May be involved in heat-stress response. Inhibits PCSK9-enhanced LDLR degradation, probably reduces PCSK9 protein levels via a translational mechanism but also competes with LDLR for binding with PCSK9. Binds to endosomes damaged by phagocytosis of particulate wear debris and participates in endosomal membrane stabilization, thereby limiting NLRP3 inflammasome activation. Required for endothelial cell surface plasmin generation and may support fibrinolytic surveillance and neoangiogenesis. Its function is as follows. (Microbial infection) Binds M.pneumoniae CARDS toxin, probably serves as one receptor for this pathogen. When ANXA2 is down-regulated by siRNA, less toxin binds to human cells and less vacuolization (a symptom of M.pneumoniae infection) is seen. The chain is Annexin A2 (ANXA2) from Homo sapiens (Human).